Reading from the N-terminus, the 228-residue chain is Phosphatidylserine decarboxylase proenzyme (228 aa).

Serine 197 (schiff-base intermediate with substrate; via pyruvic acid) is an active-site residue. Serine 197 carries the post-translational modification Pyruvic acid (Ser); by autocatalysis.

This sequence belongs to the phosphatidylserine decarboxylase family. PSD-A subfamily. As to quaternary structure, heterodimer of a large membrane-associated beta subunit and a small pyruvoyl-containing alpha subunit. The cofactor is pyruvate. In terms of processing, is synthesized initially as an inactive proenzyme. Formation of the active enzyme involves a self-maturation process in which the active site pyruvoyl group is generated from an internal serine residue via an autocatalytic post-translational modification. Two non-identical subunits are generated from the proenzyme in this reaction, and the pyruvate is formed at the N-terminus of the alpha chain, which is derived from the carboxyl end of the proenzyme. The post-translation cleavage follows an unusual pathway, termed non-hydrolytic serinolysis, in which the side chain hydroxyl group of the serine supplies its oxygen atom to form the C-terminus of the beta chain, while the remainder of the serine residue undergoes an oxidative deamination to produce ammonia and the pyruvoyl prosthetic group on the alpha chain.

The protein resides in the cell membrane. It carries out the reaction a 1,2-diacyl-sn-glycero-3-phospho-L-serine + H(+) = a 1,2-diacyl-sn-glycero-3-phosphoethanolamine + CO2. It functions in the pathway phospholipid metabolism; phosphatidylethanolamine biosynthesis; phosphatidylethanolamine from CDP-diacylglycerol: step 2/2. Functionally, catalyzes the formation of phosphatidylethanolamine (PtdEtn) from phosphatidylserine (PtdSer). This Phocaeicola vulgatus (strain ATCC 8482 / DSM 1447 / JCM 5826 / CCUG 4940 / NBRC 14291 / NCTC 11154) (Bacteroides vulgatus) protein is Phosphatidylserine decarboxylase proenzyme.